The following is a 295-amino-acid chain: Bifunctional protein FolD (295 aa).

NADP(+)-binding positions include 166–168, Ser191, and Ile232; that span reads GRS.

Belongs to the tetrahydrofolate dehydrogenase/cyclohydrolase family. Homodimer.

The catalysed reaction is (6R)-5,10-methylene-5,6,7,8-tetrahydrofolate + NADP(+) = (6R)-5,10-methenyltetrahydrofolate + NADPH. The enzyme catalyses (6R)-5,10-methenyltetrahydrofolate + H2O = (6R)-10-formyltetrahydrofolate + H(+). It functions in the pathway one-carbon metabolism; tetrahydrofolate interconversion. Catalyzes the oxidation of 5,10-methylenetetrahydrofolate to 5,10-methenyltetrahydrofolate and then the hydrolysis of 5,10-methenyltetrahydrofolate to 10-formyltetrahydrofolate. The chain is Bifunctional protein FolD from Wolbachia sp. subsp. Brugia malayi (strain TRS).